Reading from the N-terminus, the 128-residue chain is Mu-like prophage FluMu protein gp35 (128 aa).

The tract at residues 53-87 is disordered; it reads TETGSQEGGEGLSKEPAGSDEQKQLRADPPSTDLN.

It to phage Mu protein gp35. In terms of assembly, monomer.

In Haemophilus influenzae (strain ATCC 51907 / DSM 11121 / KW20 / Rd), this protein is Mu-like prophage FluMu protein gp35.